We begin with the raw amino-acid sequence, 466 residues long: Soluble pyridine nucleotide transhydrogenase (466 aa).

36 to 45 contributes to the FAD binding site; it reads ERYQNVGGGC.

Belongs to the class-I pyridine nucleotide-disulfide oxidoreductase family. FAD is required as a cofactor.

Its subcellular location is the cytoplasm. The enzyme catalyses NAD(+) + NADPH = NADH + NADP(+). Its function is as follows. Conversion of NADPH, generated by peripheral catabolic pathways, to NADH, which can enter the respiratory chain for energy generation. This Shigella boydii serotype 18 (strain CDC 3083-94 / BS512) protein is Soluble pyridine nucleotide transhydrogenase.